A 152-amino-acid chain; its full sequence is Small ribosomal subunit protein uS19 (152 aa).

The protein belongs to the universal ribosomal protein uS19 family.

Functionally, protein S19 forms a complex with S13 that binds strongly to the 16S ribosomal RNA. The chain is Small ribosomal subunit protein uS19 (rps19) from Methanocaldococcus jannaschii (strain ATCC 43067 / DSM 2661 / JAL-1 / JCM 10045 / NBRC 100440) (Methanococcus jannaschii).